A 47-amino-acid polypeptide reads, in one-letter code: uncharacterized protein (47 aa).

Residues 19–47 (EKVLKNQNPDRLSHMTDKNAQPKSKEKEE) form a disordered region.

This is an uncharacterized protein from Bacillus subtilis (strain 168).